Reading from the N-terminus, the 376-residue chain is Glutamate 5-kinase (376 aa).

Position 16 (Lys16) interacts with ATP. Substrate contacts are provided by Ser56, Asp143, and Asn155. Thr175–Asp176 provides a ligand contact to ATP. One can recognise a PUA domain in the interval Arg283–Val361.

This sequence belongs to the glutamate 5-kinase family.

It is found in the cytoplasm. It catalyses the reaction L-glutamate + ATP = L-glutamyl 5-phosphate + ADP. The protein operates within amino-acid biosynthesis; L-proline biosynthesis; L-glutamate 5-semialdehyde from L-glutamate: step 1/2. Its function is as follows. Catalyzes the transfer of a phosphate group to glutamate to form L-glutamate 5-phosphate. This chain is Glutamate 5-kinase, found in Halorhodospira halophila (strain DSM 244 / SL1) (Ectothiorhodospira halophila (strain DSM 244 / SL1)).